A 361-amino-acid chain; its full sequence is Transposase A from transposon Tn554 (361 aa).

Residues 23–120 enclose the Core-binding (CB) domain; that stretch reads YQLIEPVMKF…VVMSFLDYLS (98 aa). Residues 163–351 form the Tyr recombinase domain; it reads KQIRTLRSKE…SDQDMKNEFN (189 aa). Active-site residues include Arg-198, Lys-232, His-302, Arg-305, and His-328. Tyr-338 serves as the catalytic O-(3'-phospho-DNA)-tyrosine intermediate.

This sequence belongs to the 'phage' integrase family.

In terms of biological role, one of three proteins encoded by transposon Tn554 required for its transposition. This is Transposase A from transposon Tn554 (tnpA1) from Staphylococcus aureus (strain Mu50 / ATCC 700699).